The following is a 75-amino-acid chain: Conotoxin Vn5.6 (75 aa).

An N-terminal signal peptide occupies residues 1–19 (MLCLPVFIILLLLASPAAP). Positions 20 to 59 (NPLEKRIQSDLIRAALEDADMKTGEREILNIIDSISDVAK) are excised as a propeptide. The residue at position 60 (glutamine 60) is a Pyrrolidone carboxylic acid.

This sequence belongs to the conotoxin T superfamily. Post-translationally, contains 2 disulfide bonds that can be either 'C1-C3, C2-C4' or 'C1-C4, C2-C3', since these disulfide connectivities have been observed for conotoxins with cysteine framework V (for examples, see AC P0DQQ7 and AC P81755). As to expression, expressed by the venom duct.

Its subcellular location is the secreted. In Conus ventricosus (Mediterranean cone), this protein is Conotoxin Vn5.6.